Consider the following 395-residue polypeptide: Transcriptional coactivator yorkie (395 aa).

A disordered region spans residues 73–100 (NSFFTPPAPSHSRANSADSTYDAGSQSS). Ser-82, Ser-88, Ser-100, Ser-117, and Ser-145 each carry phosphoserine. A compositionally biased stretch (polar residues) spans 84–100 (SRANSADSTYDAGSQSS). 2 disordered regions span residues 129-150 (PSPQ…PASL) and 162-199 (AAAA…PASS). Phosphoserine; by CDK7 is present on Ser-146. A Phosphoserine modification is found at Ser-149. Over residues 162 to 179 (AAAANNPNANPSSQQQPA) the composition is skewed to low complexity. Ser-227 is subject to Phosphoserine. Tyr-228 bears the Phosphotyrosine mark. At Ser-232 the chain carries Phosphoserine. 2 consecutive WW domains span residues 241-274 (GALP…DPRI) and 310-343 (GPLP…DPRM).

It belongs to the YAP1 family. Interacts (via WW domains) with wts. Interacts (via N-terminus) with sd (via C-terminus) and this interaction enhances the transcriptional activity of sd. The phosphorylated form interacts with 14-3-3epsilon and 14-3-3zeta. Interacts with Ack and ex. Its activity is regulated by multiple phosphorylation events. Phosphorylation at Ser-88, Ser-145 and Ser-227 negatively regulate its activity and restrict its nuclear localization. Wts-mediated phosphorylation at Ser-145 promotes interaction with 14-3-3epsilon and 14-3-3zeta. Phosphorylation at Ser-88 and Ser-227 regulate nuclear localization and activity independent of 14-3-3 association. Phosphorylation at Ser-146 by Cdk7 promotes its stability by preventing ubiquitination by the DCX(DCAF12) complex. In terms of processing, ubiquitinated by the DCX(DCAF12) complex, leading to its degradation. Phosphorylation at Ser-146 by Cdk7 prevents ubiquitination by the DCX(DCAF12) complex.

The protein resides in the cytoplasm. The protein localises to the nucleus. In terms of biological role, transcriptional coactivator which is the critical downstream regulatory target in the Hippo/SWH (Sav/Wts/Hpo) signaling pathway that plays a pivotal role in organ size control and tumor suppression by restricting proliferation and promoting apoptosis. The core of this pathway is composed of a kinase cascade wherein Hippo (Hpo), in complex with its regulatory protein Salvador (Sav), phosphorylates and activates Warts (Wts) in complex with its regulatory protein Mats, which in turn phosphorylates and inactivates the Yorkie (Yki) oncoprotein. The Hippo/SWH signaling pathway inhibits the activity of the transcriptional complex formed by Scalloped (sd) and Yki and the target genes of this pathway include cyclin-E (cycE), diap1 and bantam. Regulates the expression of G1/S-specific CycE and diap1, thereby promoting cell proliferation and inhibiting apoptosis. Required for transcriptional activity of sd in wing imaginal disks. Induces expression of expression of vestigial (vg) in wing and haltere disks and the expression of transcription factor E2f (E2f). The protein is Transcriptional coactivator yorkie (yki) of Drosophila melanogaster (Fruit fly).